Consider the following 337-residue polypeptide: Holliday junction branch migration complex subunit RuvB (337 aa).

A large ATPase domain (RuvB-L) region spans residues 1–179 (MTHQVSVLHQ…FSFTGRMSYY (179 aa)). Residues L18, R19, G60, K63, T64, S65, 126-128 (EDY), R169, Y179, and R216 each bind ATP. T64 is a binding site for Mg(2+). Positions 180–250 (SDEDLTTILK…VAEKALAMLL (71 aa)) are small ATPAse domain (RuvB-S). Positions 253 to 337 (DWGLNEIDIK…DNLQSLGEEK (85 aa)) are head domain (RuvB-H). DNA-binding residues include K308 and R313.

It belongs to the RuvB family. As to quaternary structure, homohexamer. Forms an RuvA(8)-RuvB(12)-Holliday junction (HJ) complex. HJ DNA is sandwiched between 2 RuvA tetramers; dsDNA enters through RuvA and exits via RuvB. An RuvB hexamer assembles on each DNA strand where it exits the tetramer. Each RuvB hexamer is contacted by two RuvA subunits (via domain III) on 2 adjacent RuvB subunits; this complex drives branch migration. In the full resolvosome a probable DNA-RuvA(4)-RuvB(12)-RuvC(2) complex forms which resolves the HJ.

The protein localises to the cytoplasm. It carries out the reaction ATP + H2O = ADP + phosphate + H(+). The RuvA-RuvB-RuvC complex processes Holliday junction (HJ) DNA during genetic recombination and DNA repair, while the RuvA-RuvB complex plays an important role in the rescue of blocked DNA replication forks via replication fork reversal (RFR). RuvA specifically binds to HJ cruciform DNA, conferring on it an open structure. The RuvB hexamer acts as an ATP-dependent pump, pulling dsDNA into and through the RuvAB complex. RuvB forms 2 homohexamers on either side of HJ DNA bound by 1 or 2 RuvA tetramers; 4 subunits per hexamer contact DNA at a time. Coordinated motions by a converter formed by DNA-disengaged RuvB subunits stimulates ATP hydrolysis and nucleotide exchange. Immobilization of the converter enables RuvB to convert the ATP-contained energy into a lever motion, pulling 2 nucleotides of DNA out of the RuvA tetramer per ATP hydrolyzed, thus driving DNA branch migration. The RuvB motors rotate together with the DNA substrate, which together with the progressing nucleotide cycle form the mechanistic basis for DNA recombination by continuous HJ branch migration. Branch migration allows RuvC to scan DNA until it finds its consensus sequence, where it cleaves and resolves cruciform DNA. The polypeptide is Holliday junction branch migration complex subunit RuvB (Chlamydia caviae (strain ATCC VR-813 / DSM 19441 / 03DC25 / GPIC) (Chlamydophila caviae)).